We begin with the raw amino-acid sequence, 234 residues long: Matrix protein 1 (234 aa).

The interval Met1–Met103 is disordered. Over residues Cys76–Leu96 the composition is skewed to basic and acidic residues. The stretch at Pro183–Gln234 forms a coiled coil.

As to quaternary structure, interacts with host HSC70.

The protein resides in the virion. It is found in the host cytoplasm. The protein localises to the host nucleus. Functionally, may play a role in virus replication, from virus entry and uncoating to assembly and budding of the virus particle. Interaction of viral NEP with M1-Hsc70 is thought to promote nuclear export of the viral encapsidated genomes. The polypeptide is Matrix protein 1 (Infectious salmon anemia virus (isolate Atlantic salmon/Norway/810/9/99) (ISAV)).